The sequence spans 264 residues: Apolipoprotein A-I (264 aa).

The first 18 residues, 1–18 (MKAVVLTVAVFFLTGSQA), serve as a signal peptide directing secretion. Repeat copies occupy residues 67 to 88 (LKLL…EQIG) and 89 to 110 (PVTQ…QEMN). Residues 67–264 (LKLLDNWDSL…DEATKKLTTQ (198 aa)) form a 10 X approximate tandem repeats region. Methionine sulfoxide is present on methionine 109. A 3; half-length repeat occupies 111–121 (KDLEEVKLKVQ). Repeat copies occupy residues 122-143 (PYLD…QQVE), 144-165 (PLGT…EKLS), and 166-187 (PLGQ…THLA). The 7; truncated repeat unit spans residues 188-207 (PYSDELRQRLAARLEALKES). Copy 8 of the repeat occupies 208 to 229 (SSLADYQAKATEHLSALGEKAK). The stretch at 230–240 (PALEDLRQGLL) is one 9; half-length repeat. The stretch at 241-264 (PVLENLKMSFWSAVDEATKKLTTQ) is repeat 10.

Belongs to the apolipoprotein A1/A4/E family. As to quaternary structure, homodimer. Interacts with APOA1BP and CLU. Component of a sperm activating protein complex (SPAP), consisting of APOA1, an immunoglobulin heavy chain, an immunoglobulin light chain and albumin. Interacts with NDRG1. Interacts with SCGB3A2. Interacts with NAXE and YJEFN3. Post-translationally, glycosylated. In terms of processing, palmitoylated. Phosphorylation sites are present in the extracellular medium.

It localises to the secreted. Functionally, participates in the reverse transport of cholesterol from tissues to the liver for excretion by promoting cholesterol efflux from tissues and by acting as a cofactor for the lecithin cholesterol acyltransferase (LCAT). As part of the SPAP complex, activates spermatozoa motility. This is Apolipoprotein A-I (ApoA1) from Marmota monax (Woodchuck).